A 434-amino-acid polypeptide reads, in one-letter code: Beta-glucuronosyltransferase GlcAT14B (434 aa).

The Cytoplasmic segment spans residues 1–21; it reads MKKLKSYYMQVRNQQQSLDRK. A signal-anchor for type II membrane protein membrane pass occupies residues 22 to 42; the sequence is WILPLAIGSICSLFLLLLTNL. Residues 43-434 are Lumenal-facing; sequence ASSSGQTRLI…TENFRPRQCR (392 aa). N-linked (GlcNAc...) asparagine glycosylation is found at asparagine 138, asparagine 187, asparagine 316, and asparagine 392.

This sequence belongs to the glycosyltransferase 14 family.

It is found in the golgi apparatus membrane. Beta-glucuronosyltransferase involved in the biosynthesis of type II arabinogalactan (AG). Modifies both the beta-1,6-linked galactan and beta-1,3-linked galactan present in type II AG. The sequence is that of Beta-glucuronosyltransferase GlcAT14B from Arabidopsis thaliana (Mouse-ear cress).